The following is a 511-amino-acid chain: GMP synthase [glutamine-hydrolyzing] (511 aa).

A Glutamine amidotransferase type-1 domain is found at Asp5 to Val195. Cys82 acts as the Nucleophile in catalysis. Catalysis depends on residues His169 and Glu171. Residues Trp196–Arg386 enclose the GMPS ATP-PPase domain. An ATP-binding site is contributed by Ser223–Ser229.

In terms of assembly, homodimer.

The catalysed reaction is XMP + L-glutamine + ATP + H2O = GMP + L-glutamate + AMP + diphosphate + 2 H(+). The protein operates within purine metabolism; GMP biosynthesis; GMP from XMP (L-Gln route): step 1/1. Catalyzes the synthesis of GMP from XMP. The polypeptide is GMP synthase [glutamine-hydrolyzing] (Campylobacter lari (strain RM2100 / D67 / ATCC BAA-1060)).